The primary structure comprises 364 residues: Methylthioribose-1-phosphate isomerase (364 aa).

Residue D254 is the Proton donor of the active site.

Belongs to the eIF-2B alpha/beta/delta subunits family. MtnA subfamily.

It localises to the cytoplasm. Its subcellular location is the nucleus. The catalysed reaction is 5-(methylsulfanyl)-alpha-D-ribose 1-phosphate = 5-(methylsulfanyl)-D-ribulose 1-phosphate. Its pathway is amino-acid biosynthesis; L-methionine biosynthesis via salvage pathway; L-methionine from S-methyl-5-thio-alpha-D-ribose 1-phosphate: step 1/6. Functionally, catalyzes the interconversion of methylthioribose-1-phosphate (MTR-1-P) into methylthioribulose-1-phosphate (MTRu-1-P). The sequence is that of Methylthioribose-1-phosphate isomerase from Drosophila erecta (Fruit fly).